Reading from the N-terminus, the 603-residue chain is Rab proteins geranylgeranyltransferase component A (603 aa).

A Phosphoserine modification is found at S470.

Belongs to the Rab GDI family.

Functionally, substrate-binding subunit (component A) of the Rab geranylgeranyltransferase (GGTase) complex. Binds unprenylated Rab proteins and presents the substrate peptide to the catalytic component B. The component A is thought to be regenerated by transferring its prenylated Rab back to the donor membrane. The sequence is that of Rab proteins geranylgeranyltransferase component A (MRS6) from Saccharomyces cerevisiae (strain ATCC 204508 / S288c) (Baker's yeast).